A 989-amino-acid polypeptide reads, in one-letter code: E3 ubiquitin-protein ligase Arkadia (989 aa).

Residues K19, K33, K46, K58, K72, K86, K95, and K109 each participate in a glycyl lysine isopeptide (Lys-Gly) (interchain with G-Cter in SUMO2) cross-link. A disordered region spans residues 63-195; sequence FSHLCDDSQK…TEADPVPSLL (133 aa). Basic and acidic residues predominate over residues 65-88; sequence HLCDDSQKQEKDMTGNQQEQEKSG. Residues 97-109 are compositionally biased toward polar residues; sequence QQAGPSYVQNCVK. Positions 110 to 120 are enriched in basic and acidic residues; the sequence is ENQEILGRRQQ. Residues 131–144 are compositionally biased toward low complexity; sequence SSLSECLSSPSSSL. K172 participates in a covalent cross-link: Glycyl lysine isopeptide (Lys-Gly) (interchain with G-Cter in SUMO2). Positions 173-183 are enriched in basic residues; sequence SRSHSARSHKW. Residues K197 and K217 each participate in a glycyl lysine isopeptide (Lys-Gly) (interchain with G-Cter in SUMO2) cross-link. The tract at residues 213–293 is disordered; it reads KRLVKSSSSQ…PSNPAAPSGS (81 aa). The tract at residues 240-402 is interaction with AXIN1; that stretch reads ALAQRKYALL…VPTTSARMDS (163 aa). 2 stretches are compositionally biased toward low complexity: residues 248-270 and 278-291; these read LLSS…SSST and ASAS…AAPS. Positions 298–302 match the SUMO interaction motif 1 (SIM) motif; sequence VVVIE. The SUMO interaction motif 2 (SIM) signature appears at 323 to 329; that stretch reads EVEIVTV. The tract at residues 335 to 367 is disordered; that stretch reads SRSTLGHSRSHWSQGSSSHTGRPQESRNRSRIS. Positions 345 to 355 are enriched in low complexity; it reads HWSQGSSSHTG. An SUMO interaction motif 3 (SIM) motif is present at residues 380–384; sequence VVDLT. 3 disordered regions span residues 388 to 475, 506 to 559, and 641 to 675; these read DEPT…MPRL, HGHH…YHDQ, and MPPP…PPPQ. The segment covering 393–451 has biased composition (polar residues); it reads VPTTSARMDSQTTSASINNSNPSTSEQASDTTSTVASSQPSTVSETEATLTSNSATGSS. Residues 506 to 520 are compositionally biased toward basic residues; it reads HGHHFQHHHHHHHTP. Residues 548–558 show a composition bias toward polar residues; sequence ANSSSGSSYHD. The tract at residues 902–904 is ubiquitin binding; that stretch reads YPH. Glycyl lysine isopeptide (Lys-Gly) (interchain with G-Cter in SUMO2) cross-links involve residues K918 and K922. Residues C937 and C940 each contribute to the Zn(2+) site. The segment at 937 to 978 adopts an RING-type; atypical zinc-finger fold; sequence CTICLSILEEGEDVRRLPCMHLFHQVCVDQWLITNKKCPICR. Residues 952 to 956 form a ubiquitin binding region; sequence RLPCM. Zn(2+)-binding residues include H960 and C963.

This sequence belongs to the Arkadia family. As to quaternary structure, monomer. Interacts with SMAD6, SMAD7, AXIN1, AXIN2 and SKIL isoform SNON. Interacts with (phosphorylated) SMAD2 and SMAD3. Part of a complex containing RNF111, AXIN1 and SMAD7. Interacts (via SIM domains) with SUMO1 and SUMO2. Ubiquitously expressed.

The protein localises to the nucleus. It is found in the cytoplasm. The protein resides in the PML body. The catalysed reaction is S-ubiquitinyl-[E2 ubiquitin-conjugating enzyme]-L-cysteine + [acceptor protein]-L-lysine = [E2 ubiquitin-conjugating enzyme]-L-cysteine + N(6)-ubiquitinyl-[acceptor protein]-L-lysine.. It participates in protein modification; protein ubiquitination. Binds free ubiquitin non-covalently via its RING-type zinc finger. Ubiquitin-binding leads to enhance the E3 ubiquitin-protein ligase activity by stabilizing the ubiquitin-conjugating enzyme E2 (donor ubiquitin) in the 'closed' conformation and activating ubiquitin transfer. E3 ubiquitin-protein ligase required for mesoderm patterning during embryonic development. Acts as an enhancer of the transcriptional responses of the SMAD2/SMAD3 effectors, which are activated downstream of BMP. Acts by mediating ubiquitination and degradation of SMAD inhibitors such as SMAD7, inducing their proteasomal degradation and thereby enhancing the transcriptional activity of TGF-beta and BMP. In addition to enhance transcription of SMAD2/SMAD3 effectors, also regulates their turnover by mediating their ubiquitination and subsequent degradation, coupling their activation with degradation, thereby ensuring that only effectors 'in use' are degraded. Activates SMAD3/SMAD4-dependent transcription by triggering signal-induced degradation of SNON isoform of SKIL. Associates with UBE2D2 as an E2 enzyme. Specifically binds polysumoylated chains via SUMO interaction motifs (SIMs) and mediates ubiquitination of sumoylated substrates. Catalyzes 'Lys-63'-linked ubiquitination of sumoylated XPC in response to UV irradiation, promoting nucleotide excision repair. Mediates ubiquitination and degradation of sumoylated PML. The regulation of the BMP-SMAD signaling is however independent of sumoylation and is not dependent of SUMO interaction motifs (SIMs). The polypeptide is E3 ubiquitin-protein ligase Arkadia (Mus musculus (Mouse)).